The sequence spans 460 residues: Nucleosome assembly protein 1-like 2 (460 aa).

Positions 1–11 are enriched in basic and acidic residues; sequence MAESVDHKELS. 2 disordered regions span residues 1–87 and 213–238; these read MAES…DSDR and DEEEEEEEDDSAGATGGEEVNEEDPK. The span at 213 to 223 shows a compositional bias: acidic residues; sequence DEEEEEEEDDS. A Nuclear localization signal motif is present at residues 346 to 352; that stretch reads IKKKQRH.

It belongs to the nucleosome assembly protein (NAP) family. Brain, specifically expressed in neurons.

Its subcellular location is the nucleus. In terms of biological role, acidic protein which may be involved in interactions with other proteins or DNA. This chain is Nucleosome assembly protein 1-like 2 (Nap1l2), found in Mus musculus (Mouse).